Consider the following 262-residue polypeptide: Cytochrome b mRNA maturase bI2 (262 aa).

It belongs to the LAGLIDADG endonuclease family.

It is found in the mitochondrion. Its function is as follows. This protein is responsible for splicing and maturation of cytochrome b mRNA. Specifically, it may be responsible for the splicing specificity of the second intron. This Debaryomyces hansenii (strain ATCC 36239 / CBS 767 / BCRC 21394 / JCM 1990 / NBRC 0083 / IGC 2968) (Yeast) protein is Cytochrome b mRNA maturase bI2 (bI2).